Reading from the N-terminus, the 67-residue chain is COP9 signalosome complex subunit 9 homolog (67 aa).

Residues 1–31 form a disordered region; the sequence is MKPSLAADEMFSEGPGYMEMDESGGATGMMM.

The protein belongs to the CSN9 family. In terms of assembly, probable component of the COP9 signalosome (CSN) complex.

Component of the COP9 signalosome complex (CSN), a complex involved in various cellular and developmental processes. The CSN complex is an essential regulator of the ubiquitin (Ubl) conjugation pathway by mediating the deneddylation of the cullin subunits of SCF-type E3 ligase complexes, leading to decrease the Ubl ligase activity. In Drosophila melanogaster (Fruit fly), this protein is COP9 signalosome complex subunit 9 homolog.